Here is a 225-residue protein sequence, read N- to C-terminus: UPF0758 protein Vapar_4033 (225 aa).

An MPN domain is found at 103 to 225 (VFDSPGTVKQ…SYSMAEKGLL (123 aa)). The Zn(2+) site is built by His-174, His-176, and Asp-187. Positions 174 to 187 (HNHPSGSIEPSRAD) match the JAMM motif motif.

This sequence belongs to the UPF0758 family.

This is UPF0758 protein Vapar_4033 from Variovorax paradoxus (strain S110).